The following is a 451-amino-acid chain: Probable D-serine dehydratase (451 aa).

A disordered region spans residues 1-55 (MPGRTRPSCRLAITFTPRPDSATPRAGRAAPATGRRSNRSRSTLSATASPMPRRP). A compositionally biased stretch (low complexity) spans 22–35 (ATPRAGRAAPATGR). Lysine 118 bears the N6-(pyridoxal phosphate)lysine mark.

Belongs to the serine/threonine dehydratase family. DsdA subfamily. Pyridoxal 5'-phosphate is required as a cofactor.

The enzyme catalyses D-serine = pyruvate + NH4(+). The chain is Probable D-serine dehydratase from Paracidovorax citrulli (strain AAC00-1) (Acidovorax citrulli).